The chain runs to 26 residues: MAQDIISTIGDLVKWIIDTVNKFTKK.

The residue at position 1 (M1) is an N-formylmethionine.

This sequence belongs to the delta-lysin family.

Its subcellular location is the secreted. It is found in the host cell membrane. Lyses erythrocytes and many other mammalian cells. This is Delta-hemolysin (hld) from Staphylococcus aureus (strain Mu50 / ATCC 700699).